A 657-amino-acid polypeptide reads, in one-letter code: Methionine--tRNA ligase (657 aa).

Positions 13–23 (YYPSGNLHIGH) match the 'HIGH' region motif. The short motif at 308–312 (KMSKS) is the 'KMSKS' region element. Residue Lys311 participates in ATP binding. Residues 557–657 (DFDKVEIKAA…SAIPNGAVIK (101 aa)) enclose the tRNA-binding domain.

This sequence belongs to the class-I aminoacyl-tRNA synthetase family. MetG type 2B subfamily. In terms of assembly, homodimer.

The protein localises to the cytoplasm. The enzyme catalyses tRNA(Met) + L-methionine + ATP = L-methionyl-tRNA(Met) + AMP + diphosphate. In terms of biological role, is required not only for elongation of protein synthesis but also for the initiation of all mRNA translation through initiator tRNA(fMet) aminoacylation. This chain is Methionine--tRNA ligase, found in Staphylococcus aureus (strain MRSA252).